The following is a 541-amino-acid chain: MSSEMEPLLLAWSYFRRRKFQLCADLCTQMLEKSPYDQEPDPELPVHQAAWILKARALTEMVYIDEIDVDQEGIAEMMLDENAIAQVPRPGTSLKLPGTNQTGGPSQAVRPITQAGRPITGFLRPSTQSGRPGTMEQAIRTPRTAYTARPITSSSGRFVRLGTASMLTSPDGPFINLSRLNLTKYSQKPKLAKALFEYIFHHENDVKTIHLEDVVLHLGIYPFLLRNKNHIEKNALDLAALSTEHSQYKDWWWKVQIGKCYYRLGMYREAEKQFKSALKQQEMVDTFLYLAKVYVSLDQPVTALNLFKQGLDKFPGEVTLLCGIARIYEEMNNMSSAAEYYKEVLKQDNTHVEAIACIGSNHFYSDQPEIALRFYRRLLQMGIYNGQLFNNLGLCCFYAQQYDMTLTSFERALSLAENEEEAADVWYNLGHVAVGIGDTNLAHQCFRLALVNNNNHAEAYNNLAVLEMRKGHVEQARALLQTASSLAPHMYEPHFNFATISDKIGDLQRSYVAAQKSEAAFPDHVDTQHLIKQLRQHFAML.

The stretch at 14–47 (YFRRRKFQLCADLCTQMLEKSPYDQEPDPELPVH) is one TPR 1 repeat. The interval 118-137 (PITGFLRPSTQSGRPGTMEQ) is disordered. 7 TPR repeats span residues 251–284 (WWWKVQIGKCYYRLGMYREAEKQFKSALKQQEMV), 285–317 (DTFLYLAKVYVSLDQPVTALNLFKQGLDKFPGE), 318–351 (VTLLCGIARIYEEMNNMSSAAEYYKEVLKQDNTH), 352–385 (VEAIACIGSNHFYSDQPEIALRFYRRLLQMGIYN), 386–419 (GQLFNNLGLCCFYAQQYDMTLTSFERALSLAENE), 423–456 (ADVWYNLGHVAVGIGDTNLAHQCFRLALVNNNNH), and 457–490 (AEAYNNLAVLEMRKGHVEQARALLQTASSLAPHM).

As to quaternary structure, part of BBSome complex, that contains BBS1, BBS2, BBS4, BBS5, BBS7, BBS8/TTC8, BBS9 and BBIP10. Interacts with PCM1. Interacts with CCDC28B. Interacts with PKD1. In terms of tissue distribution, widely expressed.

It is found in the cytoplasm. Its subcellular location is the cytoskeleton. The protein resides in the microtubule organizing center. The protein localises to the centrosome. It localises to the cell projection. It is found in the cilium membrane. Its subcellular location is the centriolar satellite. The protein resides in the cilium. The BBSome complex is thought to function as a coat complex required for sorting of specific membrane proteins to the primary cilia. The BBSome complex is required for ciliogenesis but is dispensable for centriolar satellite function. This ciliogenic function is mediated in part by the Rab8 GDP/GTP exchange factor, which localizes to the basal body and contacts the BBSome. Rab8(GTP) enters the primary cilium and promotes extension of the ciliary membrane. Firstly the BBSome associates with the ciliary membrane and binds to RAB3IP/Rabin8, the guanosyl exchange factor (GEF) for Rab8 and then the Rab8-GTP localizes to the cilium and promotes docking and fusion of carrier vesicles to the base of the ciliary membrane. The BBSome complex, together with the LTZL1, controls SMO ciliary trafficking and contributes to the sonic hedgehog (SHH) pathway regulation. Required for proper BBSome complex assembly and its ciliary localization. The polypeptide is Tetratricopeptide repeat protein 8 (TTC8) (Homo sapiens (Human)).